Consider the following 257-residue polypeptide: Large ribosomal subunit protein eL8z (257 aa).

This sequence belongs to the eukaryotic ribosomal protein eL8 family.

The protein is Large ribosomal subunit protein eL8z (RPL7AA) of Arabidopsis thaliana (Mouse-ear cress).